A 179-amino-acid chain; its full sequence is Large ribosomal subunit protein uL5 (179 aa).

Belongs to the universal ribosomal protein uL5 family. Part of the 50S ribosomal subunit; part of the 5S rRNA/L5/L18/L25 subcomplex. Contacts the 5S rRNA and the P site tRNA. Forms a bridge to the 30S subunit in the 70S ribosome.

This is one of the proteins that bind and probably mediate the attachment of the 5S RNA into the large ribosomal subunit, where it forms part of the central protuberance. In the 70S ribosome it contacts protein S13 of the 30S subunit (bridge B1b), connecting the 2 subunits; this bridge is implicated in subunit movement. Contacts the P site tRNA; the 5S rRNA and some of its associated proteins might help stabilize positioning of ribosome-bound tRNAs. In Clostridium beijerinckii (strain ATCC 51743 / NCIMB 8052) (Clostridium acetobutylicum), this protein is Large ribosomal subunit protein uL5.